The chain runs to 928 residues: MKTSIPWVLVSSVLAFSCHLQSLANEELLSPDDSFNGNIDSGTFTPKTSATTYSLTGDVFFYEPGKGTPLSDSCFKQTTDNLTFLGNGHSLTFGFIDAGTHAGAAASTTANKNLTFSGFSLLSFDSSPSTTVTTGQGTLSSAGGVNLENIRKLVVAGNFSTADGGAIKGASFLLTGTSGDALFSNNSSSTKGGAIATTAGARIANNTGYVRFLSNIASTSGGAIDDEGTSILSNNKFLYFEGNAAKTTGGAICNTKASGSPELIISNNKTLIFASNVAETSGGAIHAKKLALSSGGFTEFLRNNVSSATPKGGAISIDASGELSLSAETGNITFVRNTLTTTGSTDTPKRNAINIGSNGKFTELRAAKNHTIFFYDPITSEGTSSDVLKINNGSAGALNPYQGTILFSGETLTADELKVADNLKSSFTQPVSLSGGKLLLQKGVTLESTSFSQEAGSLLGMDSGTTLSTTAGSITITNLGINVDSLGLKQPVSLTAKGASNKVIVSGKLNLIDIEGNIYESHMFSHDQLFSLLKITVDADVDTNVDISSLIPVPAEDPNSEYGFQGQWNVNWTTDTATNTKEATATWTKTGFVPSPERKSALVCNTLWGVFTDIRSLQQLVEIGATGMEHKQGFWVSSMTNFLHKTGDENRKGFRHTSGGYVIGGSAHTPKDDLFTFAFCHLFARDKDCFIAHNNSRTYGGTLFFKHSHTLQPQNYLRLGRAKFSESAIEKFPREIPLALDVQVSFSHSDNRMETHYTSLPESEGSWSNECIAGGIGLDLPFVLSNPHPLFKTFIPQMKVEMVYVSQNSFFESSSDGRGFSIGRLLNLSIPVGAKFVQGDIGDSYTYDLSGFFVSDVYRNNPQSTATLVMSPDSWKIRGGNLSRQAFLLRGSNNYVYNSNCELFGHYAMELRGSSRNYNVDVGTKLRF.

The signal sequence occupies residues 1-24; the sequence is MKTSIPWVLVSSVLAFSCHLQSLA. The 302-residue stretch at 627–928 folds into the Autotransporter domain; it reads GMEHKQGFWV…NVDVGTKLRF (302 aa).

This sequence belongs to the PMP outer membrane protein family.

Its subcellular location is the secreted. The protein localises to the cell wall. It is found in the cell outer membrane. This Chlamydia pneumoniae (Chlamydophila pneumoniae) protein is Probable outer membrane protein pmp11 (pmp11).